The chain runs to 568 residues: Cytosolic purine 5'-nucleotidase (568 aa).

The Nucleophile role is filled by aspartate 52. IMP is bound by residues aspartate 52 and aspartate 54. Residues aspartate 52 and aspartate 54 each contribute to the Mg(2+) site. The active-site Proton donor is aspartate 54. ATP contacts are provided by arginine 144 and asparagine 154. IMP-binding residues include arginine 202, aspartate 206, lysine 215, threonine 249, asparagine 250, serine 251, and lysine 292. Residue aspartate 351 coordinates Mg(2+). ATP contacts are provided by glutamine 453 and arginine 456. The interval 528 to 568 (ISEIKPPNLFPQKPQEITHCHDEDDDEEEEEEEEEEEEEEE) is disordered. The segment at 548–568 (HDEDDDEEEEEEEEEEEEEEE) is required for tetramer assembly. The span at 550-568 (EDDDEEEEEEEEEEEEEEE) shows a compositional bias: acidic residues.

The protein belongs to the 5'(3')-deoxyribonucleotidase family. Homotetramer. Mg(2+) serves as cofactor.

The protein localises to the cytoplasm. Its subcellular location is the cytosol. The enzyme catalyses a ribonucleoside 5'-phosphate + H2O = a ribonucleoside + phosphate. It carries out the reaction a 2'-deoxyribonucleoside + a ribonucleoside 5'-phosphate = a ribonucleoside + a 2'-deoxyribonucleoside 5'-phosphate. It catalyses the reaction IMP + H2O = inosine + phosphate. The catalysed reaction is GMP + H2O = guanosine + phosphate. The enzyme catalyses dIMP + H2O = 2'-deoxyinosine + phosphate. It carries out the reaction dGMP + H2O = 2'-deoxyguanosine + phosphate. It catalyses the reaction XMP + H2O = xanthosine + phosphate. The catalysed reaction is inosine + GMP = guanosine + IMP. The enzyme catalyses dGMP + inosine = 2'-deoxyguanosine + IMP. It carries out the reaction dIMP + inosine = 2'-deoxyinosine + IMP. It catalyses the reaction inosine + UMP = uridine + IMP. The catalysed reaction is inosine + CMP = cytidine + IMP. The enzyme catalyses inosine + AMP = IMP + adenosine. With respect to regulation, allosterically activated by various compounds including ATP, 2,3-BPG/2,3-Bisphosphoglyceric acid and Ap4A/P1,P4-bis(5'-adenosyl) tetraphosphate. Binding of an allosteric activator is a prerequisiste to magnesium and substrate binding. Inhibited by inorganic phosphate. Broad specificity cytosolic 5'-nucleotidase that catalyzes the dephosphorylation of 6-hydroxypurine nucleoside 5'-monophosphates. In addition, possesses a phosphotransferase activity by which it can transfer a phosphate from a donor nucleoside monophosphate to an acceptor nucleoside, preferably inosine, deoxyinosine and guanosine. Has the highest activities for IMP and GMP followed by dIMP, dGMP and XMP. Could also catalyze the transfer of phosphates from pyrimidine monophosphates but with lower efficiency. Through these activities regulates the purine nucleoside/nucleotide pools within the cell. The polypeptide is Cytosolic purine 5'-nucleotidase (nt5c2) (Xenopus tropicalis (Western clawed frog)).